A 1083-amino-acid chain; its full sequence is Chitin synthase 2 (1083 aa).

Basic and acidic residues-rich tracts occupy residues 1 to 10 and 18 to 30; these read MSSEREERTF and DDVR…ENQE. 2 disordered regions span residues 1–248 and 260–294; these read MSSE…IADD and DDDV…TLNE. An N-linked (GlcNAc...) asparagine glycan is attached at Asn-23. Composition is skewed to polar residues over residues 38-49 and 61-70; these read SYASSMAESQTL and AKLQNKNRTS. N-linked (GlcNAc...) asparagine glycosylation occurs at Asn-67. Composition is skewed to basic and acidic residues over residues 78–100 and 117–128; these read LPRD…KEQQ and RLRDVNSHDKLP. Composition is skewed to polar residues over residues 132–148, 177–191, and 282–292; these read SPRN…SRSG, RPWT…FTRS, and SYMSSESQDTL. Asn-417 is a glycosylation site (N-linked (GlcNAc...) asparagine). Transmembrane regions (helical) follow at residues 708-728, 747-767, 785-805, 820-840, 860-880, 889-909, 987-1007, and 1020-1040; these read WLNG…QIWF, FIQL…FYFV, TVIF…QFIL, ISMI…FYII, NMIV…ILYL, SAQY…YAFC, YLVL…SEIY, and FLLW…TTFA.

Belongs to the chitin synthase family. Class II subfamily.

It localises to the cell membrane. The enzyme catalyses [(1-&gt;4)-N-acetyl-beta-D-glucosaminyl](n) + UDP-N-acetyl-alpha-D-glucosamine = [(1-&gt;4)-N-acetyl-beta-D-glucosaminyl](n+1) + UDP + H(+). Its function is as follows. Polymerizes chitin, a structural polymer of the cell wall and septum, by transferring the sugar moiety of UDP-GlcNAc to the non-reducing end of the growing chitin polymer. Plays a critical role in cell wall integrity and virulence. This chain is Chitin synthase 2, found in Fusarium oxysporum f. sp. lycopersici (strain 4287 / CBS 123668 / FGSC 9935 / NRRL 34936) (Fusarium vascular wilt of tomato).